Here is a 416-residue protein sequence, read N- to C-terminus: Probable protein phosphatase 2C 49 (416 aa).

The 321-residue stretch at 91-411 folds into the PPM-type phosphatase domain; that stretch reads RYGVTSVFGR…DNVSVVVVDL (321 aa). The Mn(2+) site is built by D131, G132, and D319. A compositionally biased stretch (pro residues) spans 343–360; that stretch reads PPSPPGCSRPKAVLPPPA. Positions 343 to 368 are disordered; the sequence is PPSPPGCSRPKAVLPPPAGASGGGGG. D402 contributes to the Mn(2+) binding site.

This sequence belongs to the PP2C family. The cofactor is Mg(2+). Mn(2+) is required as a cofactor.

It carries out the reaction O-phospho-L-seryl-[protein] + H2O = L-seryl-[protein] + phosphate. The enzyme catalyses O-phospho-L-threonyl-[protein] + H2O = L-threonyl-[protein] + phosphate. The protein is Probable protein phosphatase 2C 49 of Oryza sativa subsp. japonica (Rice).